Here is a 504-residue protein sequence, read N- to C-terminus: Glycerol kinase (504 aa).

Thr-12 contributes to the ADP binding site. The ATP site is built by Thr-12, Thr-13, and Ser-14. Thr-12 serves as a coordination point for sn-glycerol 3-phosphate. Arg-16 contacts ADP. Sn-glycerol 3-phosphate-binding residues include Arg-82, Glu-83, Tyr-134, and Asp-246. Residues Arg-82, Glu-83, Tyr-134, Asp-246, and Gln-247 each coordinate glycerol. ADP contacts are provided by Thr-268 and Gly-312. Positions 268, 312, 316, and 413 each coordinate ATP. ADP contacts are provided by Gly-413 and Asn-417.

The protein belongs to the FGGY kinase family.

It catalyses the reaction glycerol + ATP = sn-glycerol 3-phosphate + ADP + H(+). It functions in the pathway polyol metabolism; glycerol degradation via glycerol kinase pathway; sn-glycerol 3-phosphate from glycerol: step 1/1. Its activity is regulated as follows. Inhibited by fructose 1,6-bisphosphate (FBP). In terms of biological role, key enzyme in the regulation of glycerol uptake and metabolism. Catalyzes the phosphorylation of glycerol to yield sn-glycerol 3-phosphate. The sequence is that of Glycerol kinase from Renibacterium salmoninarum (strain ATCC 33209 / DSM 20767 / JCM 11484 / NBRC 15589 / NCIMB 2235).